The primary structure comprises 403 residues: Phosphopentomutase (403 aa).

Mn(2+)-binding residues include Asp-13, Asp-298, His-303, Asp-339, His-340, and His-351.

Belongs to the phosphopentomutase family. Mn(2+) is required as a cofactor.

The protein resides in the cytoplasm. It catalyses the reaction 2-deoxy-alpha-D-ribose 1-phosphate = 2-deoxy-D-ribose 5-phosphate. It carries out the reaction alpha-D-ribose 1-phosphate = D-ribose 5-phosphate. It participates in carbohydrate degradation; 2-deoxy-D-ribose 1-phosphate degradation; D-glyceraldehyde 3-phosphate and acetaldehyde from 2-deoxy-alpha-D-ribose 1-phosphate: step 1/2. Isomerase that catalyzes the conversion of deoxy-ribose 1-phosphate (dRib-1-P) and ribose 1-phosphate (Rib-1-P) to deoxy-ribose 5-phosphate (dRib-5-P) and ribose 5-phosphate (Rib-5-P), respectively. The protein is Phosphopentomutase of Streptococcus pyogenes serotype M2 (strain MGAS10270).